Here is a 484-residue protein sequence, read N- to C-terminus: Adenylosuccinate lyase (484 aa).

Residue alanine 2 is modified to N-acetylalanine. Substrate is bound by residues 20 to 21, 85 to 87, and 111 to 112; these read RY, RHD, and TS. Residue lysine 147 is modified to N6-acetyllysine. Catalysis depends on histidine 159, which acts as the Proton donor/acceptor. Glutamine 241 is a substrate binding site. The active-site Proton donor/acceptor is serine 289. Position 295 is an N6-acetyllysine (lysine 295). Substrate is bound by residues arginine 303, arginine 329, serine 334, and arginine 338. Lysine 415 is covalently cross-linked (Glycyl lysine isopeptide (Lys-Gly) (interchain with G-Cter in SUMO1)).

Belongs to the lyase 1 family. Adenylosuccinate lyase subfamily. In terms of assembly, homotetramer. Residues from neighboring subunits contribute catalytic and substrate-binding residues to each active site. Ubiquitously expressed. Both isoforms are produced by all tissues. Isoform 2 is 10-fold less abundant than isoform 1.

The catalysed reaction is N(6)-(1,2-dicarboxyethyl)-AMP = fumarate + AMP. It carries out the reaction (2S)-2-[5-amino-1-(5-phospho-beta-D-ribosyl)imidazole-4-carboxamido]succinate = 5-amino-1-(5-phospho-beta-D-ribosyl)imidazole-4-carboxamide + fumarate. It functions in the pathway purine metabolism; AMP biosynthesis via de novo pathway; AMP from IMP: step 2/2. It participates in purine metabolism; IMP biosynthesis via de novo pathway; 5-amino-1-(5-phospho-D-ribosyl)imidazole-4-carboxamide from 5-amino-1-(5-phospho-D-ribosyl)imidazole-4-carboxylate: step 2/2. The enzyme reaction kinetics indicate cooperativity between subunits. Its function is as follows. Catalyzes two non-sequential steps in de novo AMP synthesis: converts (S)-2-(5-amino-1-(5-phospho-D-ribosyl)imidazole-4-carboxamido)succinate (SAICAR) to fumarate plus 5-amino-1-(5-phospho-D-ribosyl)imidazole-4-carboxamide, and thereby also contributes to de novo IMP synthesis, and converts succinyladenosine monophosphate (SAMP) to AMP and fumarate. In Homo sapiens (Human), this protein is Adenylosuccinate lyase (ADSL).